A 270-amino-acid chain; its full sequence is Catechol 1,2-dioxygenase (270 aa).

The Fe cation site is built by tyrosine 152, tyrosine 186, histidine 210, and histidine 212.

The protein belongs to the intradiol ring-cleavage dioxygenase family. Fe(3+) serves as cofactor.

The catalysed reaction is catechol + O2 = cis,cis-muconate + 2 H(+). The polypeptide is Catechol 1,2-dioxygenase (catA) (Rhodococcus opacus (Nocardia opaca)).